A 396-amino-acid chain; its full sequence is Probable sugar efflux transporter (396 aa).

Residues 1-14 (MTINPVSRKVAWLR) are Cytoplasmic-facing. The chain crosses the membrane as a helical span at residues 15 to 35 (VVTLAIAAFIFNTTEFVPVGL). At 36-49 (LSDIAESFHMQTAQ) the chain is on the periplasmic side. The helical transmembrane segment at 50–70 (VGIMLTIYAWVVAVMSLPFML) threads the bilayer. Topologically, residues 71–80 (LTSQMERRKL) are cytoplasmic. The chain crosses the membrane as a helical span at residues 81-101 (LIYLFVLFIASHVLSFLAWNF). Thr102 is a topological domain (periplasmic). A helical transmembrane segment spans residues 103-123 (VLVISRIGIAFAHAIFWSITA). Residues 124-135 (SLAIRLAPAGKR) are Cytoplasmic-facing. A helical transmembrane segment spans residues 136–156 (AQALSLIATGTALAMVLGLPI). At 157 to 168 (GRVVGQYFGWRT) the chain is on the periplasmic side. Residues 169–189 (TFFAIGMGALITLLCLIKLLP) form a helical membrane-spanning segment. The Cytoplasmic portion of the chain corresponds to 190–208 (KLPSEHSGSLKSLPLLFRR). The helical transmembrane segment at 209–229 (PALMSLYVLTVVVVTAHYTAY) threads the bilayer. The Periplasmic portion of the chain corresponds to 230 to 245 (SYIEPFVQNVAGLSAN). The helical transmembrane segment at 246–266 (FATVLLLILGGAGIIGSLVFG) threads the bilayer. Topologically, residues 267–274 (KLGNRHAS) are cytoplasmic. Residues 275–295 (SLVSIAIALLVVCLLLLLPAA) form a helical membrane-spanning segment. The Periplasmic segment spans residues 296–300 (ESEAH). Residues 301-321 (LAILSIFWGIAIMVIGLGMQV) traverse the membrane as a helical segment. The Cytoplasmic segment spans residues 322–332 (KVLALAPDATD). Residues 333-353 (VAMALFSGIFNIGIGAGALVG) traverse the membrane as a helical segment. Residues 354–363 (NQVSLHWSMS) lie on the Periplasmic side of the membrane. A helical membrane pass occupies residues 364–384 (AIGYIGAIPACAALVWAVLIF). Residues 385–396 (RKWPVTLEEQPH) lie on the Cytoplasmic side of the membrane.

It belongs to the major facilitator superfamily. SotB (TC 2.A.1.2) family.

It is found in the cell inner membrane. Its function is as follows. Involved in the efflux of sugars. The physiological role may be the reduction of the intracellular concentration of toxic sugars or sugar metabolites. The polypeptide is Probable sugar efflux transporter (Salmonella typhimurium (strain LT2 / SGSC1412 / ATCC 700720)).